An 803-amino-acid polypeptide reads, in one-letter code: Mechanosensitive cation channel TMEM63A (803 aa).

Residues 1 to 51 (MTDSPFLELWQSRTVAIRERLGIGDQPNDSYCYNSAKNSTVLQGVTFGGIP) lie on the Extracellular side of the membrane. A helical transmembrane segment spans residues 52-74 (TVLFIDVSCFLFLIVVFSIIRRK). The Cytoplasmic portion of the chain corresponds to 75 to 133 (FWDYGRIALVSEGNSESRFRRLSSSSSGQQDFESELGCCSWLTAIFRLHDDQILEWCGE). A helical membrane pass occupies residues 134 to 166 (DAIHYLSFQRHIIFLLVVVSCLSLCIILPVNLS). The Extracellular portion of the chain corresponds to 167–190 (GDLLDKDPYSFGRTTIANLQTDNN). Residues 191–216 (LLWLHTIFAILYLILTVVFMRHHTQS) traverse the membrane as a helical segment. Topologically, residues 217–415 (IKYKEESLVR…CWKNLSIQGF (199 aa)) are cytoplasmic. The interval 218 to 413 (KYKEESLVRR…DICWKNLSIQ (196 aa)) is intracellular linker IL2; confers mechanosensitivity. The helical transmembrane segment at 416–443 (RWWFQWLGINFILFVGLFFLTTPSIILS) threads the bilayer. At 444–461 (TMDKFNVTKPIHALNDPI) the chain is on the extracellular side. A helical membrane pass occupies residues 462–489 (ISQFFPTLLLWSFSALLPTIVCYSTLLE). Topologically, residues 490-494 (SHWTK) are cytoplasmic. A helical membrane pass occupies residues 495 to 531 (SGENRIMMTKVYIFLIFMVLILPSLGLTSLDFFFRWL). At 532-553 (FDKTSSEASIRLECVFLPDQGA) the chain is on the extracellular side. The chain crosses the membrane as a helical span at residues 554 to 585 (FFVNYVIASAFIGNGMELLRLPGLILYTFRMV). The interval 554–585 (FFVNYVIASAFIGNGMELLRLPGLILYTFRMV) is gating helix. The Cytoplasmic portion of the chain corresponds to 586 to 605 (MAKTAADRRNVKQHQAFEYE). A helical transmembrane segment spans residues 606–623 (FGAMYAWMLCVFTVIMAY). Residues 624-627 (SITC) lie on the Extracellular side of the membrane. A helical membrane pass occupies residues 628-650 (PIIVPFGLIYILLKHMVDRHNLY). The Cytoplasmic portion of the chain corresponds to 651-660 (FAYLPAKLEK). The chain crosses the membrane as a helical span at residues 661–688 (RIHFAAVNQALAAPILCLFWLYFFSFLR). Topologically, residues 689–693 (LGLKA) are extracellular. Residues 694–708 (PLTLFTFLVLLLTIL) traverse the membrane as a helical segment. Topologically, residues 709–803 (VCLAYTCFGC…DSVAAADQED (95 aa)) are cytoplasmic.

This sequence belongs to the CSC1 (TC 1.A.17) family. (Microbial infection) Interacts with H.contortus GAL-1 (via domain galectin 1).

Its subcellular location is the lysosome membrane. The protein resides in the early endosome membrane. The protein localises to the cell membrane. It catalyses the reaction Ca(2+)(in) = Ca(2+)(out). Its function is as follows. Mechanosensitive cation channel with low conductance and high activation threshold. In contrast to TMEM63B, does not show phospholipid scramblase activity. Acts as a regulator of lysosomal morphology by mediating lysosomal mechanosensitivity. Important for the baby's first breath and respiration throughout life. Upon lung inflation conducts cation currents in alveolar type 1 and 2 cells triggering lamellar body exocytosis and surfactant secretion into airspace. Also acts as an osmosensitive cation channel preferentially activated by hypotonic stress. In terms of biological role, (Microbial infection) Involved in the immunomodulatory effects exerted by H.contortus GAL-1 on host peripheral blood mononuclear cells to down-regulate host immune response. The polypeptide is Mechanosensitive cation channel TMEM63A (TMEM63A) (Capra hircus (Goat)).